A 521-amino-acid polypeptide reads, in one-letter code: GMP synthase [glutamine-hydrolyzing] (521 aa).

Positions lysine 5–glycine 197 constitute a Glutamine amidotransferase type-1 domain. Cysteine 81 acts as the Nucleophile in catalysis. Residues histidine 171 and glutamate 173 contribute to the active site. Residues tryptophan 198–arginine 390 enclose the GMPS ATP-PPase domain. Residue serine 225–serine 231 participates in ATP binding.

Homodimer.

The catalysed reaction is XMP + L-glutamine + ATP + H2O = GMP + L-glutamate + AMP + diphosphate + 2 H(+). It functions in the pathway purine metabolism; GMP biosynthesis; GMP from XMP (L-Gln route): step 1/1. Its function is as follows. Catalyzes the synthesis of GMP from XMP. The sequence is that of GMP synthase [glutamine-hydrolyzing] from Neisseria gonorrhoeae (strain NCCP11945).